Reading from the N-terminus, the 635-residue chain is MLQGRREAKKSYALFSSTFFFFFICFLSSSSAELTDKGVNFEVVALIGIKSSLTDPHGVLMNWDDTAVDPCSWNMITCSDGFVIRLEAPSQNLSGTLSSSIGNLTNLQTVLLQNNYITGNIPHEIGKLMKLKTLDLSTNNFTGQIPFTLSYSKNLQYLRVNNNSLTGTIPSSLANMTQLTFLDLSYNNLSGPVPRSLAKTFNVMGNSQICPTGTEKDCNGTQPKPMSITLNSSQNKSSDGGTKNRKIAVVFGVSLTCVCLLIIGFGFLLWWRRRHNKQVLFFDINEQNKEEMCLGNLRRFNFKELQSATSNFSSKNLVGKGGFGNVYKGCLHDGSIIAVKRLKDINNGGGEVQFQTELEMISLAVHRNLLRLYGFCTTSSERLLVYPYMSNGSVASRLKAKPVLDWGTRKRIALGAGRGLLYLHEQCDPKIIHRDVKAANILLDDYFEAVVGDFGLAKLLDHEESHVTTAVRGTVGHIAPEYLSTGQSSEKTDVFGFGILLLELITGLRALEFGKAANQRGAILDWVKKLQQEKKLEQIVDKDLKSNYDRIEVEEMVQVALLCTQYLPIHRPKMSEVVRMLEGDGLVEKWEASSQRAETNRSYSKPNEFSSSERYSDLTDDSSVLVQAMELSGPR.

The N-terminal stretch at 1–32 (MLQGRREAKKSYALFSSTFFFFFICFLSSSSA) is a signal peptide. The Extracellular segment spans residues 33-248 (ELTDKGVNFE…DGGTKNRKIA (216 aa)). N-linked (GlcNAc...) asparagine glycosylation is found at Asn92 and Asn103. 4 LRR repeats span residues 104-128 (LTNL…IGKL), 129-153 (MKLK…SYSK), 155-176 (LQYL…LANM), and 177-200 (TQLT…LAKT). N-linked (GlcNAc...) asparagine glycans are attached at residues Asn140, Asn162, Asn175, Asn188, Asn219, Asn231, and Asn235. Residues 214-242 (TEKDCNGTQPKPMSITLNSSQNKSSDGGT) are disordered. The segment covering 219-241 (NGTQPKPMSITLNSSQNKSSDGG) has biased composition (polar residues). A helical membrane pass occupies residues 249 to 269 (VVFGVSLTCVCLLIIGFGFLL). Residues 270-635 (WWRRRHNKQV…VQAMELSGPR (366 aa)) are Cytoplasmic-facing. Thr309 carries the phosphothreonine modification. In terms of domain architecture, Protein kinase spans 312 to 591 (FSSKNLVGKG…EGDGLVEKWE (280 aa)). ATP-binding positions include 318-326 (VGKGGFGNV) and Lys340. Residues Ser393 and Ser396 each carry the phosphoserine modification. Thr408 is modified (phosphothreonine). Residues 422–502 (YLHEQCDPKI…DVFGFGILLL (81 aa)) form an interaction with geminivirus NSP protein region. Asp435 (proton acceptor) is an active-site residue. 3 positions are modified to phosphothreonine: Thr468, Thr469, and Thr474. Phosphotyrosine is present on Tyr482. Ser484 bears the Phosphoserine mark. Residue Thr485 is modified to Phosphothreonine. At Ser489 the chain carries Phosphoserine. Thr564 carries the phosphothreonine modification. The segment covering 593 to 613 (SSQRAETNRSYSKPNEFSSSE) has biased composition (polar residues). The tract at residues 593-621 (SSQRAETNRSYSKPNEFSSSERYSDLTDD) is disordered.

It belongs to the protein kinase superfamily. Ser/Thr protein kinase family. In terms of assembly, oligomer. Interacts with geminivirus nuclear shuttle protein (NSP). Autophosphorylated. As to expression, expressed in flowers and roots.

Its subcellular location is the cell membrane. It catalyses the reaction L-seryl-[protein] + ATP = O-phospho-L-seryl-[protein] + ADP + H(+). The catalysed reaction is L-threonyl-[protein] + ATP = O-phospho-L-threonyl-[protein] + ADP + H(+). Its activity is regulated as follows. Inhibited by the viral nuclear shuttle protein (NSP) that binds to the region required for oligomerization. In terms of biological role, involved in defense response to geminivirus infection. Phosphorylates RPL10A in vitro. The protein is Protein NSP-INTERACTING KINASE 2 (NIK2) of Arabidopsis thaliana (Mouse-ear cress).